The chain runs to 92 residues: Small ribosomal subunit protein uS19 (92 aa).

It belongs to the universal ribosomal protein uS19 family.

Functionally, protein S19 forms a complex with S13 that binds strongly to the 16S ribosomal RNA. The sequence is that of Small ribosomal subunit protein uS19 from Rippkaea orientalis (strain PCC 8801 / RF-1) (Cyanothece sp. (strain PCC 8801)).